The chain runs to 396 residues: L-lactate dehydrogenase (396 aa).

In terms of domain architecture, FMN hydroxy acid dehydrogenase spans 1 to 380 (MIISAASDYR…TQDSLVQELS (380 aa)). Tyr24 serves as a coordination point for substrate. FMN is bound by residues Ser106 and Gln127. A substrate-binding site is contributed by Tyr129. Residue Thr155 coordinates FMN. Arg164 provides a ligand contact to substrate. Lys251 is an FMN binding site. The Proton acceptor role is filled by His275. Arg278 contacts substrate. Residue 306 to 330 (DSGIRNGLDVVRMIALGADTVLLGR) coordinates FMN.

The protein belongs to the FMN-dependent alpha-hydroxy acid dehydrogenase family. The cofactor is FMN.

It localises to the cell inner membrane. The enzyme catalyses (S)-lactate + A = pyruvate + AH2. Its function is as follows. Catalyzes the conversion of L-lactate to pyruvate. Is coupled to the respiratory chain. This Escherichia coli (strain SMS-3-5 / SECEC) protein is L-lactate dehydrogenase.